A 989-amino-acid chain; its full sequence is R3H domain-containing protein 2 (989 aa).

Disordered stretches follow at residues 23 to 71 and 106 to 147; these read EESV…AKSN and SCPS…QEYT. Over residues 36 to 56 the composition is skewed to basic and acidic residues; the sequence is PSKEEIEKESEDTSLRQETQR. Phosphoserine is present on Ser37. Residues 58 to 71 show a composition bias toward basic residues; it reads TSNHGHARKRAKSN. Over residues 109 to 143 the composition is skewed to basic and acidic residues; that stretch reads SDKEEEKSTKDVSEKEDKDKNKEKVPRRMLSRDSS. Residue Ser143 is modified to Phosphoserine. An R3H domain is found at 169–232; it reads RMMLLKLEQE…AVIINKTSNT (64 aa). In terms of domain architecture, SUZ spans 233-303; it reads RIPEQRFSEH…VRERIFARET (71 aa). Disordered stretches follow at residues 267–288, 306–390, 416–479, 493–524, 674–738, 751–793, and 848–867; these read DDNQ…EERE, NGYL…ISRP, TAQQ…FQPP, ASTG…GYMQ, GTSP…PSMV, RGQK…SLSN, and QGQS…LKSA. Residues 277-288 show a composition bias toward basic and acidic residues; the sequence is DGRRSKSIEERE. The segment covering 320–331 has biased composition (low complexity); sequence SRTSSSRQSSTD. 3 positions are modified to phosphoserine: Ser344, Ser347, and Ser363. Residues 416–428 are compositionally biased toward low complexity; it reads TAQQQQQQQQQLP. Polar residues-rich tracts occupy residues 454 to 466 and 493 to 517; these read PFGQ…QGST and ASTG…QQVL. Residues 695 to 704 show a composition bias toward pro residues; sequence SPSPCSPPQM. Residues 705–727 show a composition bias toward low complexity; it reads PQQYSGVSPSGPGVVVMQLNVPN. Residues 761 to 771 show a composition bias toward polar residues; the sequence is PESSPQANTQM. The segment covering 772-790 has biased composition (low complexity); the sequence is SSSPVTSPTQSPAPSPVTS. A phosphoserine mark is found at Ser866 and Ser868. 2 positions are modified to phosphothreonine: Thr869 and Thr873.

The protein resides in the nucleus. This is R3H domain-containing protein 2 (R3HDM2) from Bos taurus (Bovine).